We begin with the raw amino-acid sequence, 197 residues long: uncharacterized protein (197 aa).

4 helical membrane-spanning segments follow: residues 30–50, 61–81, 101–121, and 130–150; these read WVAM…VEMA, LVAG…PPLV, LWSV…LGLA, and IGEF…VAML.

It is found in the cell membrane. This is an uncharacterized protein from Mycobacterium tuberculosis (strain CDC 1551 / Oshkosh).